The following is a 102-amino-acid chain: Small ribosomal subunit protein uS17 (102 aa).

Over residues 1–15 the composition is skewed to polar residues; that stretch reads MTDETASQEASQSTD. The tract at residues 1 to 20 is disordered; the sequence is MTDETASQEASQSTDAAAPA.

The protein belongs to the universal ribosomal protein uS17 family. As to quaternary structure, part of the 30S ribosomal subunit.

In terms of biological role, one of the primary rRNA binding proteins, it binds specifically to the 5'-end of 16S ribosomal RNA. In Frankia casuarinae (strain DSM 45818 / CECT 9043 / HFP020203 / CcI3), this protein is Small ribosomal subunit protein uS17.